The following is a 373-amino-acid chain: Enoyl-[acyl-carrier-protein] reductase, mitochondrial (373 aa).

Residues 1-53 constitute a mitochondrion transit peptide; sequence MLVSRRLTGARARAPLLASLLEAWCRQGRTTSSYSAFSEPSHVRALVYGNHGD. At lysine 61 the chain carries N6-acetyllysine; alternate. Lysine 61 carries the N6-succinyllysine; alternate modification. Tyrosine 94 functions as the Proton donor in the catalytic mechanism. NADP(+)-binding positions include asparagine 167, 193-196, and 216-218; these read NSGV and RDR. Residues lysine 252 and lysine 267 each carry the N6-acetyllysine; alternate modification. Lysine 252 and lysine 267 each carry N6-succinyllysine; alternate. Residues 285-288 and 310-312 contribute to the NADP(+) site; these read YGGM and FWL. Lysine 316 is subject to N6-succinyllysine. Lysine 368 contacts NADP(+).

The protein belongs to the zinc-containing alcohol dehydrogenase family. Quinone oxidoreductase subfamily. Homodimer. As to quaternary structure, interacts with PPARA in the nucleus and increases its activity.

The protein localises to the mitochondrion. Its subcellular location is the cytoplasm. The protein resides in the nucleus. The enzyme catalyses a 2,3-saturated acyl-[ACP] + NADP(+) = a (2E)-enoyl-[ACP] + NADPH + H(+). It carries out the reaction (2E)-butenoyl-[ACP] + NADPH + H(+) = butanoyl-[ACP] + NADP(+). The catalysed reaction is (2E)-hexenoyl-[ACP] + NADPH + H(+) = hexanoyl-[ACP] + NADP(+). It catalyses the reaction (2E)-octenoyl-[ACP] + NADPH + H(+) = octanoyl-[ACP] + NADP(+). The enzyme catalyses (2E)-decenoyl-[ACP] + NADPH + H(+) = decanoyl-[ACP] + NADP(+). It carries out the reaction (2E)-dodecenoyl-[ACP] + NADPH + H(+) = dodecanoyl-[ACP] + NADP(+). The catalysed reaction is (2E)-tetradecenoyl-[ACP] + NADPH + H(+) = tetradecanoyl-[ACP] + NADP(+). It catalyses the reaction (2E)-hexadecenoyl-[ACP] + NADPH + H(+) = hexadecanoyl-[ACP] + NADP(+). Catalyzes the NADPH-dependent reduction of trans-2-enoyl thioesters in mitochondrial fatty acid synthesis (fatty acid synthesis type II). Fatty acid chain elongation in mitochondria uses acyl carrier protein (ACP) as an acyl group carrier, but the enzyme accepts both ACP and CoA thioesters as substrates in vitro. Displays a preference for medium-chain over short- and long-chain substrates. May provide the octanoyl chain used for lipoic acid biosynthesis, regulating protein lipoylation and mitochondrial respiratory activity particularly in Purkinje cells. Involved in iron homeostasis; affecting Fe-S cluster assembly and ceramide metabolism. Required for proper morphology and bioenergetic functions of mitochondria. Required for maintenance of neurons. The polypeptide is Enoyl-[acyl-carrier-protein] reductase, mitochondrial (Mecr) (Rattus norvegicus (Rat)).